Consider the following 95-residue polypeptide: Co-chaperonin GroES (95 aa).

The protein belongs to the GroES chaperonin family. Heptamer of 7 subunits arranged in a ring. Interacts with the chaperonin GroEL.

Its subcellular location is the cytoplasm. In terms of biological role, together with the chaperonin GroEL, plays an essential role in assisting protein folding. The GroEL-GroES system forms a nano-cage that allows encapsulation of the non-native substrate proteins and provides a physical environment optimized to promote and accelerate protein folding. GroES binds to the apical surface of the GroEL ring, thereby capping the opening of the GroEL channel. This chain is Co-chaperonin GroES, found in Streptococcus mutans serotype c (strain ATCC 700610 / UA159).